Reading from the N-terminus, the 716-residue chain is 1,4-alpha-glucan branching enzyme GlgB (716 aa).

D398 functions as the Nucleophile in the catalytic mechanism. Catalysis depends on E451, which acts as the Proton donor.

It belongs to the glycosyl hydrolase 13 family. GlgB subfamily. As to quaternary structure, monomer.

The enzyme catalyses Transfers a segment of a (1-&gt;4)-alpha-D-glucan chain to a primary hydroxy group in a similar glucan chain.. Its pathway is glycan biosynthesis; glycogen biosynthesis. Catalyzes the formation of the alpha-1,6-glucosidic linkages in glycogen by scission of a 1,4-alpha-linked oligosaccharide from growing alpha-1,4-glucan chains and the subsequent attachment of the oligosaccharide to the alpha-1,6 position. The chain is 1,4-alpha-glucan branching enzyme GlgB from Nitrobacter winogradskyi (strain ATCC 25391 / DSM 10237 / CIP 104748 / NCIMB 11846 / Nb-255).